Here is a 426-residue protein sequence, read N- to C-terminus: Methylamine dehydrogenase heavy chain (426 aa).

Residues 1–31 (MASARESTPRYLTLIGATLACSALALGAAQA) form the signal peptide. Residues 32–64 (QTEPAEPEAPAETAAADAAGQTEGQRGAAEAAA) are disordered. Residues cysteine 221 and cysteine 236 are joined by a disulfide bond.

The protein belongs to the aromatic amine dehydrogenase heavy chain family. As to quaternary structure, tetramer of two light and two heavy chains.

Its subcellular location is the periplasm. The catalysed reaction is 2 oxidized [amicyanin] + methylamine + H2O = 2 reduced [amicyanin] + formaldehyde + NH4(+) + 2 H(+). Its function is as follows. Methylamine dehydrogenase carries out the oxidation of methylamine. Electrons are passed from methylamine dehydrogenase to amicyanin. This is Methylamine dehydrogenase heavy chain (mauB) from Paracoccus versutus (Thiobacillus versutus).